The following is a 218-amino-acid chain: 7-cyano-7-deazaguanine synthase (218 aa).

10 to 20 (FSGGQDSTTCL) is a binding site for ATP. 4 residues coordinate Zn(2+): cysteine 186, cysteine 195, cysteine 198, and cysteine 201.

This sequence belongs to the QueC family. In terms of assembly, homodimer. It depends on Zn(2+) as a cofactor.

The catalysed reaction is 7-carboxy-7-deazaguanine + NH4(+) + ATP = 7-cyano-7-deazaguanine + ADP + phosphate + H2O + H(+). It functions in the pathway purine metabolism; 7-cyano-7-deazaguanine biosynthesis. Functionally, catalyzes the ATP-dependent conversion of 7-carboxy-7-deazaguanine (CDG) to 7-cyano-7-deazaguanine (preQ(0)). This Exiguobacterium sibiricum (strain DSM 17290 / CCUG 55495 / CIP 109462 / JCM 13490 / 255-15) protein is 7-cyano-7-deazaguanine synthase.